A 174-amino-acid polypeptide reads, in one-letter code: RNA pyrophosphohydrolase (174 aa).

Residues 6–149 (GYRPNVGIIL…KRDVYLGALK (144 aa)) enclose the Nudix hydrolase domain. The Nudix box motif lies at 38-59 (GGIKPGESPETAMYRELYEEVG).

It belongs to the Nudix hydrolase family. RppH subfamily. It depends on a divalent metal cation as a cofactor.

In terms of biological role, accelerates the degradation of transcripts by removing pyrophosphate from the 5'-end of triphosphorylated RNA, leading to a more labile monophosphorylated state that can stimulate subsequent ribonuclease cleavage. This Neisseria meningitidis serogroup C / serotype 2a (strain ATCC 700532 / DSM 15464 / FAM18) protein is RNA pyrophosphohydrolase.